A 312-amino-acid polypeptide reads, in one-letter code: Olfactory receptor 6C2 (312 aa).

The Extracellular portion of the chain corresponds to 1–23 (MKNHTVIRTFILLGLTGDPHLQV). Asn3 carries N-linked (GlcNAc...) asparagine glycosylation. A helical transmembrane segment spans residues 24–44 (LLFIFLFLTYMLSVTGNLTII). Residues 45-52 (TLTLVDHH) lie on the Cytoplasmic side of the membrane. A helical transmembrane segment spans residues 53–73 (LKTPMYFFLRNFSFLEVSFTT). Residues 74–97 (VCIPRFLYNISMGDNTITYNACAS) lie on the Extracellular side of the membrane. The N-linked (GlcNAc...) asparagine glycan is linked to Asn82. Cys95 and Cys187 are joined by a disulfide. A helical membrane pass occupies residues 98–118 (QIFFVILFGATEFFLLAAMSY). At 119-137 (DRYVAICKPLHYVVIMNNR) the chain is on the cytoplasmic side. Residues 138 to 158 (VCTLLVLCCWVAGLMIIVPPL) traverse the membrane as a helical segment. Residues 159–195 (SLGLQLEFCDSNAIDHFSCDAGPLLKISCSDTWVIEQ) are Extracellular-facing. A helical transmembrane segment spans residues 196–215 (MVILMAVFALIITLVCVILS). Topologically, residues 216 to 235 (YLYIVRTILKFPSVQQRKKA) are cytoplasmic. Residues 236–256 (FSTCSSHMIVVSIAYGSCIFI) traverse the membrane as a helical segment. At 257–269 (YIKPSAKDEVAIN) the chain is on the extracellular side. The helical transmembrane segment at 270 to 290 (KGVSVLTTSVAPLLNPFIYTL) threads the bilayer. Residues 291–312 (RNKQVKQAFSDSIKRIAFLSKK) are Cytoplasmic-facing.

Belongs to the G-protein coupled receptor 1 family.

It localises to the cell membrane. In terms of biological role, odorant receptor. This Homo sapiens (Human) protein is Olfactory receptor 6C2 (OR6C2).